We begin with the raw amino-acid sequence, 829 residues long: Periplasmic nitrate reductase (829 aa).

The segment at residues 1-31 (MKLSRRDFMKANAVAAAAAAAGLTIPTVARA) is a signal peptide (tat-type signal). The 57-residue stretch at 40-96 (ITWDKAPCRFCGTGCGVLVGTQNGRIVASQGDPDAPVNRGLNCIKGYFLPKIMYGKD) folds into the 4Fe-4S Mo/W bis-MGD-type domain. [4Fe-4S] cluster-binding residues include Cys-47, Cys-50, Cys-54, and Cys-82. Residues Lys-84, Gln-151, Asn-176, Cys-180, 213–220 (WGSNMAEM), 263–265 (QSD), Met-373, Gln-377, Asn-483, 509–510 (SD), Lys-532, Asp-559, and 719–728 (TGRVLEHWHT) contribute to the Mo-bis(molybdopterin guanine dinucleotide) site. Residue Phe-795 coordinates substrate. Positions 803 and 820 each coordinate Mo-bis(molybdopterin guanine dinucleotide).

It belongs to the prokaryotic molybdopterin-containing oxidoreductase family. NasA/NapA/NarB subfamily. As to quaternary structure, component of the periplasmic nitrate reductase NapAB complex composed of NapA and NapB. The cofactor is [4Fe-4S] cluster. Mo-bis(molybdopterin guanine dinucleotide) serves as cofactor. Predicted to be exported by the Tat system. The position of the signal peptide cleavage has not been experimentally proven.

The protein resides in the periplasm. The catalysed reaction is 2 Fe(II)-[cytochrome] + nitrate + 2 H(+) = 2 Fe(III)-[cytochrome] + nitrite + H2O. Functionally, catalytic subunit of the periplasmic nitrate reductase complex NapAB. Receives electrons from NapB and catalyzes the reduction of nitrate to nitrite. This chain is Periplasmic nitrate reductase, found in Edwardsiella ictaluri (strain 93-146).